We begin with the raw amino-acid sequence, 32 residues long: U21-ctenitoxin-Co1a (32 aa).

Disulfide bonds link cysteine 3–cysteine 17, cysteine 10–cysteine 21, and cysteine 16–cysteine 30.

As to expression, expressed by the venom gland.

The protein localises to the secreted. Not toxic to mice by intracerebroventricular injection. The chain is U21-ctenitoxin-Co1a from Ctenus ornatus (Brazilian spider).